A 210-amino-acid chain; its full sequence is SAP domain-containing ribonucleoprotein (210 aa).

Alanine 2 is modified (N-acetylalanine). An SAP domain is found at 8-42 (LHKLKLAELKQECLARGLETKGIKQDLINRLQAYL). Position 10 is an N6-acetyllysine (lysine 10). The segment covering 45–64 (HAEEEANEEDVLGDETEEEE) has biased composition (acidic residues). The segment at 45–87 (HAEEEANEEDVLGDETEEEEPKPIELPVKEEEPPEKAVDMASE) is disordered. Residues 65–87 (PKPIELPVKEEEPPEKAVDMASE) show a composition bias toward basic and acidic residues. An N6-acetyllysine modification is found at lysine 142. The tract at residues 162 to 210 (SSISRKSEDDEKLKKRKERFGIVTSSAGTGTTEDTEAKKRKRAERFGIA) is disordered. The residue at position 163 (serine 163) is a Phosphoserine. A compositionally biased stretch (polar residues) spans 184–193 (VTSSAGTGTT).

This sequence belongs to the SAP domain-containing ribonucleoprotein family. Interacts with DDX39A. Interacts with FUS. Interacts (via the C-terminal domain) with DDX39B; the interaction is direct and facilitates RNA binding of DDX39B. Component of the transcription/export (TREX) complex at least composed of ALYREF/THOC4, DDX39B, SARNP/CIP29, CHTOP and the THO subcomplex; TREX seems to have dynamic structure involving ATP-dependent remodeling; in the complex interacts directly with DDX39B in a ATP-dependent manner which bridges it to ALYREF/THOC4.

Its subcellular location is the nucleus. The protein resides in the nucleus speckle. Functionally, binds both single-stranded and double-stranded DNA with higher affinity for the single-stranded form. Specifically binds to scaffold/matrix attachment region DNA. Also binds single-stranded RNA. Enhances RNA unwinding activity of DDX39A. May participate in important transcriptional or translational control of cell growth, metabolism and carcinogenesis. Component of the TREX complex which is thought to couple mRNA transcription, processing and nuclear export, and specifically associates with spliced mRNA and not with unspliced pre-mRNA. The TREX complex is recruited to spliced mRNAs by a transcription-independent mechanism, binds to mRNA upstream of the exon-junction complex (EJC) and is recruited in a splicing- and cap-dependent manner to a region near the 5' end of the mRNA where it functions in mRNA export to the cytoplasm via the TAP/NXF1 pathway. Associates with DDX39B, which facilitates RNA binding of DDX39B and likely plays a role in mRNA export. The polypeptide is SAP domain-containing ribonucleoprotein (Sarnp) (Mus musculus (Mouse)).